The sequence spans 318 residues: Probable cell division protein WhiA (318 aa).

Residues Ser-281–Lys-314 constitute a DNA-binding region (H-T-H motif).

It belongs to the WhiA family.

Functionally, involved in cell division and chromosome segregation. This is Probable cell division protein WhiA from Clostridium tetani (strain Massachusetts / E88).